We begin with the raw amino-acid sequence, 532 residues long: Zinc finger protein 350 (532 aa).

Residues 8–79 form the KRAB domain; it reads ITLEDVAVDF…EDGIHSGACS (72 aa). 8 C2H2-type zinc fingers span residues 206-228, 234-256, 262-284, 290-312, 318-340, 346-368, 374-396, and 402-424; these read HVCS…QVMH, HRCS…QRTH, YECP…QKTH, YICS…QRIH, YICN…QRFH, FVCS…QRIH, FECS…QRTH, and YGCN…KRIH. Residues 427-443 are compositionally biased toward basic and acidic residues; it reads EKQEAAKVENPPAERHS. Positions 427–465 are disordered; it reads EKQEAAKVENPPAERHSSLHTSDVMQEKNSANGATTQVP. A compositionally biased stretch (polar residues) spans 445-465; sequence LHTSDVMQEKNSANGATTQVP.

It belongs to the krueppel C2H2-type zinc-finger protein family. As to quaternary structure, interacts with BRCA1. Interacts with RNF11. Widely expressed.

The protein localises to the nucleus. It is found in the nucleus matrix. In terms of biological role, transcriptional repressor. Binds to a specific sequence, 5'-GGGxxxCAGxxxTTT-3', within GADD45 intron 3. This chain is Zinc finger protein 350 (ZNF350), found in Homo sapiens (Human).